Here is a 465-residue protein sequence, read N- to C-terminus: Amino-acid carrier protein AlsT (465 aa).

The next 10 helical transmembrane spans lie at 20-40, 82-102, 142-162, 177-197, 208-228, 241-261, 296-316, 336-356, 382-402, and 405-425; these read LFYILIGLGLFFTIRFGFIQF, VALAIATGGPGAVFWMWVVAA, WLGIVFAILITVSFGLIFNAV, VNKIVVAIVLAVLTAFIIFGG, IVPVMAGIYILIALFVVITNI, NALGFEQVVGGGIGGIIVIGA, LGVFFDTFIICTSTAFIILLY, IGGWAPTFIAVAMFLFAFSSV, IAVIAMVVYGSLSGFQIVWDM, and LFMGIMALINLIVIALLSNVA.

This sequence belongs to the alanine or glycine:cation symporter (AGCS) (TC 2.A.25) family.

It is found in the cell membrane. The sequence is that of Amino-acid carrier protein AlsT (alsT) from Bacillus subtilis (strain 168).